The following is a 232-amino-acid chain: uncharacterized protein (232 aa).

The chain crosses the membrane as a helical span at residues 10 to 32 (GLTIYLYPVIAWIILVTKIESGL).

The protein localises to the membrane. This is an uncharacterized protein from Archaeoglobus fulgidus (strain ATCC 49558 / DSM 4304 / JCM 9628 / NBRC 100126 / VC-16).